We begin with the raw amino-acid sequence, 268 residues long: MILDVIVEDKLKRLPEHKKRISEEEMTRLAIESQRVSHSFYDALAKDGLSIISEFKKASPSHGNMNNKITLEKRIKQYGESADAISCLTEEDHFKGSTEYLKQIRQMTDLPIIRKDFIIDPYQVYEAKVIGADAVLLIAAILDDSRFKELYDLAYSLGLDVLCEVHNEEEMQRMLNLDVKIIGINNRNLKTFEVDLDTTKKLADMVTPEMRKAGKLLVSESGVADTDDIKVLAKSGADALLIGTVLMEAPKPEELISEFKEVYNAERK.

Belongs to the TrpC family.

The catalysed reaction is 1-(2-carboxyphenylamino)-1-deoxy-D-ribulose 5-phosphate + H(+) = (1S,2R)-1-C-(indol-3-yl)glycerol 3-phosphate + CO2 + H2O. The protein operates within amino-acid biosynthesis; L-tryptophan biosynthesis; L-tryptophan from chorismate: step 4/5. This Lachnospira eligens (strain ATCC 27750 / DSM 3376 / VPI C15-48 / C15-B4) (Eubacterium eligens) protein is Indole-3-glycerol phosphate synthase.